We begin with the raw amino-acid sequence, 536 residues long: Maintenance of mitochondrial morphology protein 1 (536 aa).

Residues M1 to G25 are Lumenal-facing. A helical membrane pass occupies residues L26–F46. Over G47–T536 the chain is Cytoplasmic. Disordered regions lie at residues H52–P135, G275–A331, G416–M467, and Y505–T536. 3 stretches are compositionally biased toward polar residues: residues Y69 to R81, S88 to S105, and Y112 to S121. The span at K122–S132 shows a compositional bias: basic residues. Residues Q134–P409 form the SMP-LTD domain. Positions T321 to A331 are enriched in low complexity. 2 stretches are compositionally biased toward gly residues: residues T442 to M467 and G507 to R517.

This sequence belongs to the MMM1 family. Homodimer. Component of the ER-mitochondria encounter structure (ERMES) or MDM complex, composed of MMM1, MDM10, MDM12 and MDM34. An MMM1 homodimer associates with one molecule of MDM12 on each side in a pairwise head-to-tail manner, and the SMP-LTD domains of MMM1 and MDM12 generate a continuous hydrophobic tunnel for phospholipid trafficking.

The protein localises to the endoplasmic reticulum membrane. In terms of biological role, component of the ERMES/MDM complex, which serves as a molecular tether to connect the endoplasmic reticulum (ER) and mitochondria. Components of this complex are involved in the control of mitochondrial shape and protein biogenesis, and function in nonvesicular lipid trafficking between the ER and mitochondria. The MDM12-MMM1 subcomplex functions in the major beta-barrel assembly pathway that is responsible for biogenesis of all outer membrane beta-barrel proteins, and acts in a late step after the SAM complex. The MDM10-MDM12-MMM1 subcomplex further acts in the TOM40-specific pathway after the action of the MDM12-MMM1 complex. Essential for establishing and maintaining the structure of mitochondria and maintenance of mtDNA nucleoids. This is Maintenance of mitochondrial morphology protein 1 from Ajellomyces dermatitidis (strain ER-3 / ATCC MYA-2586) (Blastomyces dermatitidis).